We begin with the raw amino-acid sequence, 177 residues long: Myosin regulatory light chain 2 (177 aa).

The segment covering 1 to 16 (MSRKSGSRSSSKRSKK) has biased composition (basic residues). Residues 1–24 (MSRKSGSRSSSKRSKKSGGGSNVF) form a disordered region. IgE-binding epitope regions lie at residues 13–30 (RSKK…FTQR), 22–48 (NVFD…DKDG), 49–66 (VIGK…GRIA), 58–90 (TFDE…LLNM), 79–99 (PAPI…TGES), and 118–141 (NIDC…QEAD). The EF-hand 1 domain occupies 30–65 (RQVAEFKEGFQLMDRDKDGVIGKTDLRGTFDEIGRI). Residues Asp-43, Asp-45, Asp-47, and Asp-54 each coordinate Ca(2+). The 36-residue stretch at 135–170 (FSSQEADDALDQMDIDDGGKIDVQGVIQMLTAGGGD) folds into the EF-hand 2 domain.

Myosin is a hexamer of 2 heavy chains and 4 light chains. In terms of tissue distribution, expressed in tail muscle (at protein level).

The protein is Myosin regulatory light chain 2 of Penaeus vannamei (Whiteleg shrimp).